The chain runs to 119 residues: Small ribosomal subunit protein bS16 (119 aa).

The disordered stretch occupies residues 81–119 (GLAKRPARNNPKKAEPGQKAKERAAARAEKAGAGDDAAA). The span at 92–113 (KKAEPGQKAKERAAARAEKAGA) shows a compositional bias: basic and acidic residues.

Belongs to the bacterial ribosomal protein bS16 family.

This chain is Small ribosomal subunit protein bS16, found in Methylobacterium sp. (strain 4-46).